We begin with the raw amino-acid sequence, 407 residues long: Protease ElaD (407 aa).

His-231 is an active-site residue. Cys-317 serves as the catalytic Nucleophile.

Belongs to the peptidase C79 family.

Protease that can act as an efficient and specific deubiquitinating enzyme in vitro. Does not possess desumoylating and deneddylating activities. The physiological substrate is unknown. This chain is Protease ElaD (elaD), found in Escherichia coli O157:H7.